Here is a 273-residue protein sequence, read N- to C-terminus: Anthranilate synthase beta subunit 2, chloroplastic (273 aa).

Residues 1-36 constitute a chloroplast transit peptide; sequence MAATTLYNSCLLQPKYGFTTRRLNQSLVNSLTNPTR. The Glutamine amidotransferase type-1 domain occupies 71-270; sequence PIIVIDNYDS…IKLVEKKESE (200 aa). The active-site Nucleophile is the C149. Catalysis depends on residues H244 and E246.

As to quaternary structure, heterotetramer consisting of two non-identical subunits: a beta subunit and a large alpha subunit.

It localises to the plastid. The protein resides in the chloroplast. It catalyses the reaction chorismate + L-glutamine = anthranilate + pyruvate + L-glutamate + H(+). Its pathway is amino-acid biosynthesis; L-tryptophan biosynthesis; L-tryptophan from chorismate: step 1/5. With respect to regulation, feedback inhibition by tryptophan. In terms of biological role, part of a heterotetrameric complex that catalyzes the two-step biosynthesis of anthranilate, an intermediate in the biosynthesis of L-tryptophan. In the first step, the glutamine-binding beta subunit of anthranilate synthase (AS) provides the glutamine amidotransferase activity which generates ammonia as a substrate that, along with chorismate, is used in the second step, catalyzed by the large alpha subunit of AS to produce anthranilate. This chain is Anthranilate synthase beta subunit 2, chloroplastic (ASB2), found in Arabidopsis thaliana (Mouse-ear cress).